The sequence spans 203 residues: Large ribosomal subunit protein bL25 (203 aa).

A disordered region spans residues 1 to 21 (MMENLQVNQREKKTRHSSRQC). Positions 12–21 (KKTRHSSRQC) are enriched in basic residues.

The protein belongs to the bacterial ribosomal protein bL25 family. CTC subfamily. In terms of assembly, part of the 50S ribosomal subunit; part of the 5S rRNA/L5/L18/L25 subcomplex. Contacts the 5S rRNA. Binds to the 5S rRNA independently of L5 and L18.

In terms of biological role, this is one of the proteins that binds to the 5S RNA in the ribosome where it forms part of the central protuberance. This chain is Large ribosomal subunit protein bL25, found in Clostridium perfringens (strain 13 / Type A).